The primary structure comprises 172 residues: dCTP deaminase (172 aa).

Residues 97-102 (RSSFAR) and Asp-113 each bind dCTP. Catalysis depends on Glu-123, which acts as the Proton donor/acceptor. Residues Tyr-155 and Gln-162 each coordinate dCTP.

The protein belongs to the dCTP deaminase family. In terms of assembly, homotrimer.

It carries out the reaction dCTP + H2O + H(+) = dUTP + NH4(+). Its pathway is pyrimidine metabolism; dUMP biosynthesis; dUMP from dCTP (dUTP route): step 1/2. Functionally, catalyzes the deamination of dCTP to dUTP. This Metallosphaera sedula (strain ATCC 51363 / DSM 5348 / JCM 9185 / NBRC 15509 / TH2) protein is dCTP deaminase.